The chain runs to 123 residues: Small ribosomal subunit protein uS12 (123 aa).

Positions 1–32 (MPTINQLVRHGRKRSVKKTNTPALKASPQKRG) are disordered. Asp89 carries the post-translational modification 3-methylthioaspartic acid.

It belongs to the universal ribosomal protein uS12 family. In terms of assembly, part of the 30S ribosomal subunit. Contacts proteins S8 and S17. May interact with IF1 in the 30S initiation complex.

With S4 and S5 plays an important role in translational accuracy. In terms of biological role, interacts with and stabilizes bases of the 16S rRNA that are involved in tRNA selection in the A site and with the mRNA backbone. Located at the interface of the 30S and 50S subunits, it traverses the body of the 30S subunit contacting proteins on the other side and probably holding the rRNA structure together. The combined cluster of proteins S8, S12 and S17 appears to hold together the shoulder and platform of the 30S subunit. This Desulfatibacillum aliphaticivorans protein is Small ribosomal subunit protein uS12.